A 281-amino-acid chain; its full sequence is Cell growth regulator with EF hand domain protein 1 (281 aa).

Residues 1–21 (MFQWLMQALMLPLLLLPLGRA) form the signal peptide. 2 consecutive EF-hand domains span residues 71–106 (DREQ…ALAP) and 115–150 (PVIL…PKHT). Ca(2+)-binding residues include D84, D86, N88, Q90, E95, D128, D130, D132, and E139. The segment at 148–281 (KHTESLPPAL…HSIQLENDEI (134 aa)) is disordered. The segment covering 168 to 183 (LLANSPLQSETQQSLG) has biased composition (polar residues). Basic and acidic residues predominate over residues 184–213 (TKEEIRGQVEAKRASLEPEQEAGHQTEGKV). Residues S217 and S228 each carry the phosphoserine modification. The span at 237–256 (EGAEEQVEIKDNEGEAKELL) shows a compositional bias: basic and acidic residues.

Probably digested extracellularly by an unknown serine protease generating extremely hydrophobic bioactive peptides.

The protein resides in the secreted. In terms of biological role, mediates cell-cell adhesion in a calcium-dependent manner. Able to inhibit growth in several cell lines. The chain is Cell growth regulator with EF hand domain protein 1 from Mus musculus (Mouse).